The chain runs to 500 residues: 5-taurinomethyluridine-[tRNA] synthase subunit GTPB3, mitochondrial (500 aa).

The transit peptide at 1-73 directs the protein to the mitochondrion; it reads MHFISCCLRR…RRLTRSLPAP (73 aa). 3 residues coordinate 5,10-methylenetetrahydrofolate: Arg-53, Glu-111, and Lys-151. The 175-residue stretch at 248-422 folds into the TrmE-type G domain; sequence GVHVVIAGST…LLTLLHNTLK (175 aa). GTP-binding positions include 255–262, 281–285, 302–305, and 373–376; these read GSTNAGKS, GTTRD, DTAG, and NESD. Residue Asn-258 participates in K(+) binding. Residues Ser-262 and Thr-283 each contribute to the Mg(2+) site. Lys-500 is a 5,10-methylenetetrahydrofolate binding site.

This sequence belongs to the TRAFAC class TrmE-Era-EngA-EngB-Septin-like GTPase superfamily. TrmE GTPase family. K(+) is required as a cofactor.

Its subcellular location is the mitochondrion. It catalyses the reaction GTP + H2O = GDP + phosphate + H(+). Functionally, GTPase component of the GTPBP3-MTO1 complex that catalyzes the 5-taurinomethyluridine (taum(5)U) modification at the 34th wobble position (U34) of mitochondrial tRNAs (mt-tRNAs), which plays a role in mt-tRNA decoding and mitochondrial translation. Taum(5)U formation on mammalian mt-tRNA requires the presence of both GTPBP3-mediated GTPase activity and MTO1 catalytic activity. The chain is 5-taurinomethyluridine-[tRNA] synthase subunit GTPB3, mitochondrial (gtpbp3) from Danio rerio (Zebrafish).